A 131-amino-acid chain; its full sequence is MKFFASLSKRFAPVLSLVVLVAGTLLLSAAPASAATVQIKMGTDKYAPLYEPKALSISAGDTVEFVMNKVGPHNVIFDKVPAGESAPALSNTKLAIAPGSFYSVTLGTPGTYSFYCTPHRGAGMVGTITVE.

An N-terminal signal peptide occupies residues 1–34 (MKFFASLSKRFAPVLSLVVLVAGTLLLSAAPASA). Residues 35–131 (ATVQIKMGTD…AGMVGTITVE (97 aa)) form the Plastocyanin-like domain. Cu cation contacts are provided by His-73, Cys-116, His-119, and Met-124.

It belongs to the plastocyanin family. Cu(2+) serves as cofactor.

The protein localises to the cellular thylakoid membrane. Functionally, participates in electron transfer between P700 and the cytochrome b6-f complex in photosystem I. This Prochlorothrix hollandica protein is Plastocyanin (petE).